Consider the following 274-residue polypeptide: 16S rRNA (guanine(1405)-N(7))-methyltransferase (274 aa).

S-adenosyl-L-methionine is bound by residues Phe64, 102–104, Arg108, Ala133, Asp156, 182–183, Leu198, and Gln207; these read HMS and DL.

The protein belongs to the methyltransferase superfamily. Aminoglycoside resistance family.

It catalyses the reaction guanosine(1405) in 16S rRNA + S-adenosyl-L-methionine = N(7)-methylguanosine(1405) in 16S rRNA + S-adenosyl-L-homocysteine. Functionally, specifically methylates the N(7) position of guanine 1405 in 16S rRNA. Confers resistance to aminoglycosides. The protein is 16S rRNA (guanine(1405)-N(7))-methyltransferase (grm) of Micromonospora rosea.